The chain runs to 275 residues: Diaminopimelate epimerase (275 aa).

N12, Q45, and N65 together coordinate substrate. The active-site Proton donor is the C74. Residues 75 to 76, N158, N191, and 209 to 210 contribute to the substrate site; these read GN and ER. C218 serves as the catalytic Proton acceptor. Substrate is bound at residue 219–220; the sequence is GT.

This sequence belongs to the diaminopimelate epimerase family. As to quaternary structure, homodimer.

Its subcellular location is the cytoplasm. The catalysed reaction is (2S,6S)-2,6-diaminopimelate = meso-2,6-diaminopimelate. It functions in the pathway amino-acid biosynthesis; L-lysine biosynthesis via DAP pathway; DL-2,6-diaminopimelate from LL-2,6-diaminopimelate: step 1/1. Functionally, catalyzes the stereoinversion of LL-2,6-diaminopimelate (L,L-DAP) to meso-diaminopimelate (meso-DAP), a precursor of L-lysine and an essential component of the bacterial peptidoglycan. In Shewanella frigidimarina (strain NCIMB 400), this protein is Diaminopimelate epimerase.